Reading from the N-terminus, the 241-residue chain is Thiamine import ATP-binding protein ThiQ (241 aa).

In terms of domain architecture, ABC transporter spans Ile7–Ile235. Gly37–Ser44 contacts ATP.

This sequence belongs to the ABC transporter superfamily. Thiamine importer (TC 3.A.1.19.1) family. The complex is composed of two ATP-binding proteins (ThiQ), two transmembrane proteins (ThiP) and a solute-binding protein (ThiB).

The protein localises to the cell inner membrane. The catalysed reaction is thiamine(out) + ATP + H2O = thiamine(in) + ADP + phosphate + H(+). Part of the ABC transporter complex ThiBPQ involved in thiamine import. Responsible for energy coupling to the transport system. The chain is Thiamine import ATP-binding protein ThiQ from Brucella melitensis biotype 1 (strain ATCC 23456 / CCUG 17765 / NCTC 10094 / 16M).